The primary structure comprises 210 residues: Chaperone protein TorD (210 aa).

It belongs to the TorD/DmsD family. TorD subfamily.

It is found in the cytoplasm. Functionally, involved in the biogenesis of TorA. Acts on TorA before the insertion of the molybdenum cofactor and, as a result, probably favors a conformation of the apoenzyme that is competent for acquiring the cofactor. This chain is Chaperone protein TorD, found in Salmonella choleraesuis (strain SC-B67).